The primary structure comprises 77 residues: Small ribosomal subunit protein bS18 (77 aa).

This sequence belongs to the bacterial ribosomal protein bS18 family. Part of the 30S ribosomal subunit. Forms a tight heterodimer with protein bS6.

In terms of biological role, binds as a heterodimer with protein bS6 to the central domain of the 16S rRNA, where it helps stabilize the platform of the 30S subunit. In Bacillus thuringiensis subsp. konkukian (strain 97-27), this protein is Small ribosomal subunit protein bS18.